The primary structure comprises 538 residues: Probable inorganic phosphate transporter 1-4 (538 aa).

Residues 1 to 23 are Cytoplasmic-facing; that stretch reads MAGELKVLNALDSAKTQWYHFTA. A helical transmembrane segment spans residues 24–44; it reads IVIAGMGFFTDAYDLFSISLV. Topologically, residues 45–69 are extracellular; sequence TKLLGRIYYFNPASKSPGSLPPNVS. A helical membrane pass occupies residues 70-90; it reads AAVNGVAFCGTLAGQLFFGWL. Over 91-98 the chain is Cytoplasmic; the sequence is GDKMGRKK. Residues 99–119 traverse the membrane as a helical segment; it reads VYGMTLMLMVICCLASGLSFG. Over 120 to 123 the chain is Extracellular; that stretch reads SSAK. A helical membrane pass occupies residues 124 to 144; that stretch reads GVMATLCFFRFWLGFGIGGDY. Over 145–163 the chain is Cytoplasmic; it reads PLSATIMSEYANKRTRGAF. Residues 164–184 traverse the membrane as a helical segment; the sequence is IAAVFAMQGFGNLTGGIVAII. The Extracellular segment spans residues 185–210; sequence VSAAFKSRFDAPAYRDDRTGSTVPQA. A helical membrane pass occupies residues 211 to 231; sequence DYAWRIVLMFGAIPALLTYYW. At 232–294 the chain is on the cytoplasmic side; that stretch reads RMKMPETARY…RQFLRRHGRH (63 aa). A helical transmembrane segment spans residues 295-315; sequence LLGTTVCWFVLDIAFYSSNLF. Topologically, residues 316-346 are extracellular; sequence QKDIYTAVQWLPKADTMSALEEMFKISRAQT. A helical membrane pass occupies residues 347–367; it reads LVALCGTIPGYWFTVFFIDII. Residues 368-369 lie on the Cytoplasmic side of the membrane; that stretch reads GR. The chain crosses the membrane as a helical span at residues 370–390; that stretch reads FVIQLGGFFFMTAFMLGLAVP. The Extracellular segment spans residues 391 to 396; sequence YHHWTT. The helical transmembrane segment at 397-417 threads the bilayer; it reads PGNHIGFVVMYAFTFFFANFG. The Cytoplasmic segment spans residues 418–440; that stretch reads PNSTTFIVPAEIFPARLRSTCHG. The helical transmembrane segment at 441-461 threads the bilayer; that stretch reads ISAAAGKAGAIVGSFGFLYAA. The Extracellular segment spans residues 462–481; that stretch reads QSTDASKTDAGYPPGIGVRN. Residues 482–502 form a helical membrane-spanning segment; sequence SLFFLAGCNVIGFFFTFLVPE. Residues 503–538 lie on the Cytoplasmic side of the membrane; it reads SKGKSLEELSGENEDDDDVPEAPATADHRTAPAPPA. A disordered region spans residues 507–538; that stretch reads SLEELSGENEDDDDVPEAPATADHRTAPAPPA. The segment covering 511 to 522 has biased composition (acidic residues); the sequence is LSGENEDDDDVP.

This sequence belongs to the major facilitator superfamily. Phosphate:H(+) symporter (TC 2.A.1.9) family. As to expression, expressed at low levels in roots.

The protein resides in the membrane. Functionally, high-affinity transporter for external inorganic phosphate. This chain is Probable inorganic phosphate transporter 1-4 (PHT1-4), found in Oryza sativa subsp. japonica (Rice).